The chain runs to 154 residues: MYYYLITLAVIALDQLTKWIVVQNMEIGQKIEVIPGFLYWTSYRNDGAAWSILEGHMWFFYLITVVVIGIIIYIMQKYAKGKRLFSISLAFILGGAIGNFIDRVLHQEVVDFVQTVWGNYYFPIFNVADAALSVGVVLMLVYVFVDDRKTKGIK.

2 consecutive transmembrane segments (helical) span residues 55–75 (GHMWFFYLITVVVIGIIIYIM) and 84–104 (LFSISLAFILGGAIGNFIDRV). Residues aspartate 111 and aspartate 129 contribute to the active site. Residues 124–144 (IFNVADAALSVGVVLMLVYVF) traverse the membrane as a helical segment.

It belongs to the peptidase A8 family.

Its subcellular location is the cell membrane. The enzyme catalyses Release of signal peptides from bacterial membrane prolipoproteins. Hydrolyzes -Xaa-Yaa-Zaa-|-(S,diacylglyceryl)Cys-, in which Xaa is hydrophobic (preferably Leu), and Yaa (Ala or Ser) and Zaa (Gly or Ala) have small, neutral side chains.. The protein operates within protein modification; lipoprotein biosynthesis (signal peptide cleavage). This protein specifically catalyzes the removal of signal peptides from prolipoproteins. In Listeria monocytogenes serotype 4b (strain CLIP80459), this protein is Lipoprotein signal peptidase.